The sequence spans 347 residues: A-type ATP synthase subunit C (347 aa).

This sequence belongs to the V-ATPase V0D/AC39 subunit family. Has multiple subunits with at least A(3), B(3), C, D, E, F, H, I and proteolipid K(x).

Its subcellular location is the cell membrane. Functionally, component of the A-type ATP synthase that produces ATP from ADP in the presence of a proton gradient across the membrane. This Haloquadratum walsbyi (strain DSM 16790 / HBSQ001) protein is A-type ATP synthase subunit C.